The sequence spans 389 residues: N-terminal EF-hand calcium-binding protein 2 (389 aa).

At Arg-10 the chain carries Omega-N-methylarginine. Arg-42 is modified (asymmetric dimethylarginine). EF-hand domains follow at residues 63–98 and 99–132; these read GGTAVILDIFRRADKNDDGKLSLEEFQLFFADGVLN and EKELEGLFHTIDSDNTNHVDTKELCDYFVEHMGD. Asp-76, Asn-78, Asp-80, Lys-82, Glu-87, Asp-110, Asp-112, Thr-114, His-116, and Glu-121 together coordinate Ca(2+). A coiled-coil region spans residues 173–198; sequence LKETANQIQSLLSSVESAVEAIEEQT. The ABM domain maps to 289 to 377; sequence QLVRQEMAVC…LSQPEALSQI (89 aa).

Interacts (calcium-dependent) with ADORA2A and GRM5. In terms of tissue distribution, expressed in the iris, in the ciliary margin of the retina and in the inner portion of the neural retina. Expressed in the spinal dorsal horn with especially strong expression in lamina IIi; found in excitory synaptic boutons (at protein level).

It localises to the cytoplasm. The protein resides in the cell projection. Its subcellular location is the dendrite. It is found in the axon. The protein localises to the cell membrane. Its function is as follows. May act as a signaling scaffold protein that senses intracellular calcium. Can modulate ligand-induced internalization of ADORA2A and coupling efficiency of mGluR5/GRM5; for both receptors may regulate signaling activity such as promoting MAPK1/3 (ERK1/2) activation. The polypeptide is N-terminal EF-hand calcium-binding protein 2 (Necab2) (Mus musculus (Mouse)).